Reading from the N-terminus, the 844-residue chain is Protein translocase subunit SecA (844 aa).

Residues Gln-87, 105 to 109, and Asp-495 each bind ATP; that span reads GEGKT. The span at 783-800 shows a compositional bias: basic and acidic residues; sequence QAPPEELKQEFKHKEEPK. The segment at 783–844 is disordered; sequence QAPPEELKQE…GQKYKKCCGA (62 aa). Polar residues predominate over residues 802–811; the sequence is LNYSGAQKET. Residues 816–826 are compositionally biased toward basic and acidic residues; it reads PERRGEPKVGR. Zn(2+) is bound by residues Cys-830, Cys-832, Cys-841, and Cys-842.

Belongs to the SecA family. In terms of assembly, monomer and homodimer. Part of the essential Sec protein translocation apparatus which comprises SecA, SecYEG and auxiliary proteins SecDF-YajC and YidC. Zn(2+) is required as a cofactor.

It localises to the cell inner membrane. It is found in the cytoplasm. The enzyme catalyses ATP + H2O + cellular proteinSide 1 = ADP + phosphate + cellular proteinSide 2.. In terms of biological role, part of the Sec protein translocase complex. Interacts with the SecYEG preprotein conducting channel. Has a central role in coupling the hydrolysis of ATP to the transfer of proteins into and across the cell membrane, serving as an ATP-driven molecular motor driving the stepwise translocation of polypeptide chains across the membrane. The protein is Protein translocase subunit SecA of Nitratidesulfovibrio vulgaris (strain DSM 19637 / Miyazaki F) (Desulfovibrio vulgaris).